The primary structure comprises 133 residues: Holo-[acyl-carrier-protein] synthase (133 aa).

Positions 8 and 56 each coordinate Mg(2+).

This sequence belongs to the P-Pant transferase superfamily. AcpS family. Mg(2+) serves as cofactor.

Its subcellular location is the cytoplasm. The enzyme catalyses apo-[ACP] + CoA = holo-[ACP] + adenosine 3',5'-bisphosphate + H(+). In terms of biological role, transfers the 4'-phosphopantetheine moiety from coenzyme A to a Ser of acyl-carrier-protein. The sequence is that of Holo-[acyl-carrier-protein] synthase from Clostridium perfringens (strain 13 / Type A).